The chain runs to 445 residues: MDIRQVTETIAMIEEQNFDIRTITMGISLLDCIDPNINRAAEKIYQKITTKAANLVAVGDEIAAELGIPIVNKRVSVTPISLIGAATDATDYVVLAKALDKAAKEIGVDFIGGFSALVQKGYQKGDEILINSIPRALAETDKVCSSVNIGSTKSGINMTAVADMGRIIKETANLSDMGVAKLVVFANAVEDNPFMAGAFHGVGEADVIINVGVSGPGVVKRALEKVRGQSFDVVAETVKKTAFKITRIGQLVGQMASERLGVEFGIVDLSLAPTPAVGDSVARVLEEMGLETVGTHGTTAALALLNDQVKKGGVMACNQVGGLSGAFIPVSEDEGMIAAVQNGSLNLEKLEAMTAICSVGLDMIAIPEDTPAETIAAMIADEAAIGVINMKTTAVRIIPKGKEGDMIEFGGLLGTAPVMRVNGASSVDFISRGGQIPAPIHSFKN.

It belongs to the UPF0210 family. In terms of assembly, homodimer.

The chain is UPF0210 protein SPH_0352 from Streptococcus pneumoniae (strain Hungary19A-6).